Consider the following 411-residue polypeptide: Secretion apparatus protein BsaZ (411 aa).

A run of 4 helical transmembrane segments spans residues 28-48 (IVAL…VDLT), 80-100 (IAAP…LVQS), 137-157 (ALLY…LYHA), and 175-195 (IVLT…VLIL). Residues 341-411 (AANRGGPPPE…APARTGDQNA (71 aa)) are disordered. Residues 370–404 (DACADNAFPDDAPPGAAAPNAGSPDGPAPDGGAPA) show a composition bias toward low complexity.

This sequence belongs to the type III secretion exporter family.

The protein resides in the cell membrane. In terms of biological role, part of the bsa type III secretion system, is involved in the intracellular replication of invading bacteria inside the host cell. Probably necessary for the lysis of the vacuole membrane and escape into the host cell cytoplasm. This Burkholderia pseudomallei (strain K96243) protein is Secretion apparatus protein BsaZ (bsaZ).